Reading from the N-terminus, the 515-residue chain is 1-pyrroline-5-carboxylate dehydrogenase (515 aa).

Catalysis depends on residues Glu286 and Cys320.

It belongs to the aldehyde dehydrogenase family. RocA subfamily.

The catalysed reaction is L-glutamate 5-semialdehyde + NAD(+) + H2O = L-glutamate + NADH + 2 H(+). The protein operates within amino-acid degradation; L-proline degradation into L-glutamate; L-glutamate from L-proline: step 2/2. The polypeptide is 1-pyrroline-5-carboxylate dehydrogenase (Bacillus anthracis (strain A0248)).